Reading from the N-terminus, the 537-residue chain is Serendipity locus protein alpha (537 aa).

It is found in the cytoplasm. Its subcellular location is the cell membrane. Its function is as follows. Required for the cellularization of the syncytial blastoderm embryo. Involved in the localization of the actin filaments just prior to and during plasma membrane invagination. Sry-alpha together with nullo and bnk may provide auxiliary functions, by acting both to stabilize a large and dynamic microfilament structure and regulate its functions. This Drosophila virilis (Fruit fly) protein is Serendipity locus protein alpha (Sry-alpha).